A 459-amino-acid polypeptide reads, in one-letter code: tRNA modification GTPase MnmE (459 aa).

(6S)-5-formyl-5,6,7,8-tetrahydrofolate-binding residues include Arg23, Glu86, and Arg125. Residues 221 to 380 form the TrmE-type G domain; the sequence is GLKTVIVGKP…LQDKIESMVY (160 aa). Asn231 contributes to the K(+) binding site. GTP-binding positions include 231 to 236, 250 to 256, and 275 to 278; these read NVGKSS, TDIPGTT, and DTAG. Ser235 is a Mg(2+) binding site. Positions 250, 252, and 255 each coordinate K(+). Residue Thr256 coordinates Mg(2+). A (6S)-5-formyl-5,6,7,8-tetrahydrofolate-binding site is contributed by Lys459.

This sequence belongs to the TRAFAC class TrmE-Era-EngA-EngB-Septin-like GTPase superfamily. TrmE GTPase family. In terms of assembly, homodimer. Heterotetramer of two MnmE and two MnmG subunits. It depends on K(+) as a cofactor.

It is found in the cytoplasm. In terms of biological role, exhibits a very high intrinsic GTPase hydrolysis rate. Involved in the addition of a carboxymethylaminomethyl (cmnm) group at the wobble position (U34) of certain tRNAs, forming tRNA-cmnm(5)s(2)U34. This is tRNA modification GTPase MnmE from Clostridioides difficile (strain 630) (Peptoclostridium difficile).